The sequence spans 96 residues: Large ribosomal subunit protein bL25 (96 aa).

It belongs to the bacterial ribosomal protein bL25 family. Part of the 50S ribosomal subunit; part of the 5S rRNA/L5/L18/L25 subcomplex. Contacts the 5S rRNA. Binds to the 5S rRNA independently of L5 and L18.

Functionally, this is one of the proteins that binds to the 5S RNA in the ribosome where it forms part of the central protuberance. The protein is Large ribosomal subunit protein bL25 of Buchnera aphidicola subsp. Schizaphis graminum (strain Sg).